The chain runs to 599 residues: MTASSWELLALYLGALLLAAWPLGIWLARISSGRLPGWMQRVEAPLLRLAGTSADQAMNWWQYALALLAFNALGLLAVYALQRLQAVLPLNPAGMAAISPDSAFNTAISFVSNTNWQGYGGEASMSYLTQMLALAVQNFLSAATGIAVVFALFRGFAARATGAIGNFWVDVTRITAWLLLPLSLVFALFLAGNGVIQNFDAYKDVATLEATSYQQPKTGLDGQPLKDAQGAAVMENVRTDKQTLAMGPVASQEAIKMLGTNGGGFFNANSAHPYENPNALTNFFQMLAIFLIPAALCFAFGREVGDLRQGWAVLAAMTVMFVIAVVAITPAEQAGNPLLTPLGVDQAASALQAGGNMEGKETRFGINASSLFAVITTAASCGAVIAMHDSFTPLGGMVPMVMMQLGEVVFGGTGTGLYGMLIFAILAVFISGLMIGRTPEYLGKKIESHEMKLTSIAILVTPILVLAGTAVAVLAGAGRAGVANPGAHGFSEILYALSSAGNNNGSAFAGLSANTPFYNTLLGLAMWLGRFGVIVPVLAIAGSLAAKKRLPVTPGTMPTHGPLFVLLLIGTVLLVGLLNYVPALALGPVVEHLMLWPAH.

12 helical membrane-spanning segments follow: residues 8–28 (LLAL…IWLA), 61–81 (WQYA…VYAL), 133–153 (ALAV…FALF), 176–196 (AWLL…NGVI), 280–300 (LTNF…CFAF), 311–331 (WAVL…ITPA), 366–386 (INAS…AVIA), 391–411 (FTPL…VVFG), 416–436 (GLYG…LMIG), 456–476 (IAIL…VLAG), 521–541 (LLGL…LAIA), and 563–583 (LFVL…YVPA).

This sequence belongs to the KdpA family. As to quaternary structure, the system is composed of three essential subunits: KdpA, KdpB and KdpC.

The protein resides in the cell inner membrane. In terms of biological role, part of the high-affinity ATP-driven potassium transport (or Kdp) system, which catalyzes the hydrolysis of ATP coupled with the electrogenic transport of potassium into the cytoplasm. This subunit binds the periplasmic potassium ions and delivers the ions to the membrane domain of KdpB through an intramembrane tunnel. This is Potassium-transporting ATPase potassium-binding subunit from Polaromonas naphthalenivorans (strain CJ2).